The chain runs to 1049 residues: Desmoglein-1 (1049 aa).

Positions 1–23 (MDWSFFRVVAMLFIFLVVVEVNS) are cleaved as a signal peptide. Positions 24–49 (EFRIQVRDYNTKNGTIKWHSIRRQKR) are excised as a propeptide. N-linked (GlcNAc...) asparagine glycosylation is found at Asn36, Asn110, and Asn180. Cadherin domains are found at residues 50-158 (EWIK…PVFS), 159-270 (MATF…PYME), 271-385 (QSSY…GPVF), and 386-497 (RPGS…TEPN). Residues 50-548 (EWIKFAAACR…LLSDNVHFGP (499 aa)) are Extracellular-facing. The segment at 485-534 (SFGNDDRTNTEPNTKITTNTGRQESTSSTNYDTSTTSTDSSQVYSSEPGN) is disordered. The segment covering 494 to 508 (TEPNTKITTNTGRQE) has biased composition (polar residues). Positions 509 to 530 (STSSTNYDTSTTSTDSSQVYSS) are enriched in low complexity. The chain crosses the membrane as a helical span at residues 549-569 (AGIGLLIMGFLVLGLVPFLMI). At 570-1049 (CCDCGGAPRS…TKYSTVQYSK (480 aa)) the chain is on the cytoplasmic side. At Ser579 the chain carries Phosphoserine. 5 Desmoglein repeat repeats span residues 813–839 (TYPS…TVTE), 840–869 (SYTT…ERVV), 870–899 (GPIS…ERVI), 900–927 (APSS…ERVI), and 928–956 (QPTS…ERVV). Positions 1014 to 1035 (HMRSSSDHHFNQTIGSASPSTA) are disordered. The segment covering 1024–1035 (NQTIGSASPSTA) has biased composition (polar residues).

Binds to JUP/plakoglobin. Interacts with PKP2. Interacts with DSC3; there is evidence to suggest that the interaction promotes cell-cell adhesion of keratinocytes. As to quaternary structure, (Microbial infection) Interacts with Staphylococcus aureus protein SdrD; this interaction increases S.aureus adherence to keratinocytes. In terms of tissue distribution, expressed in all suprabasal layers of the epidermis, with the highest expression seen in the granular layer (at protein level).

The protein resides in the cell membrane. The protein localises to the cell junction. It is found in the desmosome. It localises to the cytoplasm. Its subcellular location is the nucleus. Its function is as follows. Component of intercellular desmosome junctions. Involved in the interaction of plaque proteins and intermediate filaments mediating cell-cell adhesion. This Homo sapiens (Human) protein is Desmoglein-1 (DSG1).